Here is a 226-residue protein sequence, read N- to C-terminus: Ornithine decarboxylase antizyme (226 aa).

The protein belongs to the ODC antizyme family. In terms of assembly, interacts with ODC and thereby sterically blocks ODC homodimerization.

Its function is as follows. Ornithine decarboxylase (ODC) antizyme protein that negatively regulates ODC activity and intracellular polyamine biosynthesis in response to increased intracellular polyamine levels. Binds to ODC monomers, inhibiting the assembly of the functional ODC homodimer, and targets the monomers for ubiquitin-independent proteolytic destruction by the 26S proteasome. The sequence is that of Ornithine decarboxylase antizyme (spa1) from Schizosaccharomyces pombe (strain 972 / ATCC 24843) (Fission yeast).